The primary structure comprises 1753 residues: Negative regulator of sporulation PMD1 (1753 aa).

Kelch repeat units lie at residues 143–198 (NIYI…VLNE) and 206–253 (KLII…KILV). At Thr-298 the chain carries Phosphothreonine. A compositionally biased stretch (polar residues) spans 651 to 664 (TTKFGNSSQSSNGS). Disordered regions lie at residues 651–753 (TTKF…TTCS) and 771–807 (LGLS…CTLS). The span at 670 to 683 (SKNGNSKSNSNTSL) shows a compositional bias: low complexity. 4 stretches are compositionally biased toward polar residues: residues 690–699 (DFTSSTSSPK), 740–753 (TGTS…TTCS), 774–783 (SEQSGRSTRA), and 797–807 (NDGNDSNCTLS). A Phosphoserine modification is found at Ser-838. Disordered regions lie at residues 875 to 915 (IASP…LGSS), 938 to 957 (PLEP…SSLA), and 962 to 988 (FGRD…ARRI). The segment covering 880-900 (QSRQTSFASTASTASVVSSTS) has biased composition (low complexity). Residues 938-947 (PLEPLPPVPK) are compositionally biased toward pro residues. A compositionally biased stretch (low complexity) spans 979-988 (KSSSSDARRI). 3 positions are modified to phosphoserine: Ser-1289, Ser-1307, and Ser-1356. Disordered regions lie at residues 1312–1467 (SPAT…DLDS), 1604–1686 (PIFA…NKRF), and 1706–1753 (SAVN…GKRR). Residues 1344 to 1379 (VSRQQNFPRRSSSFTETVPTEPTRYNYQNLDSSKSN) show a composition bias toward polar residues. A compositionally biased stretch (basic and acidic residues) spans 1399–1430 (NFDKYKVETLQKRNSNDGKDLDRTNDPLKNRG). Positions 1653-1677 (IKFSQAPSTQISPRTSVTDFTASQQ) are enriched in polar residues. Residue Ser-1664 is modified to Phosphoserine. Over residues 1711-1723 (GRKESEGHCEDRS) the composition is skewed to basic and acidic residues.

It is found in the cytoplasm. In terms of biological role, negatively regulates early sporulation-specific genes. Seems to exert its function by positively regulating the Ras/cAMP pathway. Required for growth under alkaline conditions. Acts synergetically with MDS3. The sequence is that of Negative regulator of sporulation PMD1 (PMD1) from Saccharomyces cerevisiae (strain ATCC 204508 / S288c) (Baker's yeast).